A 349-amino-acid chain; its full sequence is tRNA N6-adenosine threonylcarbamoyltransferase (349 aa).

Residues His114 and His118 each coordinate Fe cation. Substrate-binding positions include 136 to 140 (IMSGG), Asp169, Gly182, and Asn280. Residue Asp308 coordinates Fe cation.

Belongs to the KAE1 / TsaD family. The cofactor is Fe(2+).

The protein resides in the cytoplasm. The enzyme catalyses L-threonylcarbamoyladenylate + adenosine(37) in tRNA = N(6)-L-threonylcarbamoyladenosine(37) in tRNA + AMP + H(+). Its function is as follows. Required for the formation of a threonylcarbamoyl group on adenosine at position 37 (t(6)A37) in tRNAs that read codons beginning with adenine. Is involved in the transfer of the threonylcarbamoyl moiety of threonylcarbamoyl-AMP (TC-AMP) to the N6 group of A37, together with TsaE and TsaB. TsaD likely plays a direct catalytic role in this reaction. The polypeptide is tRNA N6-adenosine threonylcarbamoyltransferase (Ehrlichia chaffeensis (strain ATCC CRL-10679 / Arkansas)).